The following is a 93-amino-acid chain: Putative pterin-4-alpha-carbinolamine dehydratase (93 aa).

This sequence belongs to the pterin-4-alpha-carbinolamine dehydratase family.

It carries out the reaction (4aS,6R)-4a-hydroxy-L-erythro-5,6,7,8-tetrahydrobiopterin = (6R)-L-erythro-6,7-dihydrobiopterin + H2O. The sequence is that of Putative pterin-4-alpha-carbinolamine dehydratase from Sulfurisphaera tokodaii (strain DSM 16993 / JCM 10545 / NBRC 100140 / 7) (Sulfolobus tokodaii).